A 562-amino-acid chain; its full sequence is Transcriptional adapter 2A (562 aa).

The ZZ-type zinc finger occupies 91–146 (KDANRCATCRCSLTEPYIKCSECLDTLLCLQCFSRGKEAFSHRNNHAYIIVRDNIQ). 8 residues coordinate Zn(2+): C96, C99, C110, C113, C119, C122, H132, and H136. The region spanning 154–198 (WTARDERILLKTLRTHGYGNWEAVSQALDQRHEPAEVRRHYHDCY) is the SANT domain. The SWIRM domain occupies 471 to 562 (CLTPTEYNFS…GHISRPPSYG (92 aa)).

As to quaternary structure, component of the Ada2a-containing (ATAC) complex composed of at least Ada2a, Atac1, Hcf, Ada3, Gcn5, Mocs2B, Charac-14, Atac3, Atac2, NC2beta and wds. Component of a complex that does not include Gcn5 or Ada3.

The protein resides in the nucleus. It localises to the chromosome. Component of the histone acetyltransferase (HAT) complex ATAC; predominantly involved in acetylation of histone H4, including at Lys-6 (H4K5ac) and Lys-13 (H4K12ac). May be part of several different complexes, including Gcn5-independent complexes involved in RNA polymerase II-dependent transcription. The polypeptide is Transcriptional adapter 2A (Drosophila melanogaster (Fruit fly)).